The chain runs to 353 residues: Photosystem II protein D1 (353 aa).

T2 is modified (N-acetylthreonine). A Phosphothreonine modification is found at T2. 3 helical membrane-spanning segments follow: residues 29-46, 118-133, and 142-156; these read YIGW…TATS, HFLL…EWEL, and WIAV…AATA. Chlorophyll a is bound at residue H118. Y126 is a pheophytin a binding site. Residues D170 and E189 each contribute to the [CaMn4O5] cluster site. The chain crosses the membrane as a helical span at residues 197 to 218; the sequence is FHMLGVAGVFGGSLFSAMHGSL. Residue H198 participates in chlorophyll a binding. A quinone contacts are provided by residues H215 and 264–265; that span reads SF. H215 contributes to the Fe cation binding site. H272 is a binding site for Fe cation. The chain crosses the membrane as a helical span at residues 274–288; the sequence is FLAAWPVVGIWFTAL. [CaMn4O5] cluster is bound by residues H332, E333, D342, and A344. Positions 345-353 are excised as a propeptide; that stretch reads ALEVPSING.

It belongs to the reaction center PufL/M/PsbA/D family. In terms of assembly, PSII is composed of 1 copy each of membrane proteins PsbA, PsbB, PsbC, PsbD, PsbE, PsbF, PsbH, PsbI, PsbJ, PsbK, PsbL, PsbM, PsbT, PsbX, PsbY, PsbZ, Psb30/Ycf12, at least 3 peripheral proteins of the oxygen-evolving complex and a large number of cofactors. It forms dimeric complexes. It depends on The D1/D2 heterodimer binds P680, chlorophylls that are the primary electron donor of PSII, and subsequent electron acceptors. It shares a non-heme iron and each subunit binds pheophytin, quinone, additional chlorophylls, carotenoids and lipids. D1 provides most of the ligands for the Mn4-Ca-O5 cluster of the oxygen-evolving complex (OEC). There is also a Cl(-1) ion associated with D1 and D2, which is required for oxygen evolution. The PSII complex binds additional chlorophylls, carotenoids and specific lipids. as a cofactor. In terms of processing, tyr-161 forms a radical intermediate that is referred to as redox-active TyrZ, YZ or Y-Z. Post-translationally, C-terminally processed by CTPA; processing is essential to allow assembly of the oxygen-evolving complex and thus photosynthetic growth.

It is found in the plastid. It localises to the chloroplast thylakoid membrane. It catalyses the reaction 2 a plastoquinone + 4 hnu + 2 H2O = 2 a plastoquinol + O2. In terms of biological role, photosystem II (PSII) is a light-driven water:plastoquinone oxidoreductase that uses light energy to abstract electrons from H(2)O, generating O(2) and a proton gradient subsequently used for ATP formation. It consists of a core antenna complex that captures photons, and an electron transfer chain that converts photonic excitation into a charge separation. The D1/D2 (PsbA/PsbD) reaction center heterodimer binds P680, the primary electron donor of PSII as well as several subsequent electron acceptors. The chain is Photosystem II protein D1 from Agrostis stolonifera (Creeping bentgrass).